The sequence spans 550 residues: Parathyroid hormone 2 receptor (550 aa).

An N-terminal signal peptide occupies residues 1–24 (MAGLGASLHVWGWLMLGSCLLARA). At 27–145 (DSDGTITIEE…GKQEFFERLY (119 aa)) the chain is on the extracellular side. N-linked (GlcNAc...) asparagine glycosylation is found at N51, N106, N116, and N121. A helical membrane pass occupies residues 146-169 (VMYTVGYSISFGSLAVAILIIGYF). The Cytoplasmic portion of the chain corresponds to 170–176 (RRLHCTR). Residues 177–196 (NYIHMHLFVSFMLRATSIFV) traverse the membrane as a helical segment. The Extracellular portion of the chain corresponds to 197 to 237 (KDRVVHAHIGVKELESLIMQDDPQNSIEATSVDKSQYIGCK). A helical transmembrane segment spans residues 238 to 260 (IAVVMFIYFLATNYYWILVEGLY). Topologically, residues 261 to 275 (LHNLIFVAFFSDTKY) are cytoplasmic. The helical transmembrane segment at 276-297 (LWGFILIGWGFPAAFVAAWAVA) threads the bilayer. Residues 298 to 316 (RATLADARCWELSAGDIKW) lie on the Extracellular side of the membrane. A helical membrane pass occupies residues 317-337 (IYQAPILAAIGLNFILFLNTV). Over 338–364 (RVLATKIWETNAVGHDTRKQYRKLAKS) the chain is Cytoplasmic. The helical transmembrane segment at 365–383 (TLVLVLVFGVHYIVFVCLP) threads the bilayer. Residues 384–394 (HSFTGLGWEIR) lie on the Extracellular side of the membrane. The helical transmembrane segment at 395-417 (MHCELFFNSFQGFFVSIIYCYCN) threads the bilayer. At 418–550 (GEVQAEVKKM…GCQGETEDVL (133 aa)) the chain is on the cytoplasmic side. The span at 511–531 (EETKEDSGRQGDDILMEKPSR) shows a compositional bias: basic and acidic residues. The interval 511–550 (EETKEDSGRQGDDILMEKPSRPMESNPDTEGCQGETEDVL) is disordered.

Belongs to the G-protein coupled receptor 2 family. In terms of assembly, binds to TIPF39/TIP39. Expressed abundantly in brain and pancreas. Also expressed in the testis.

It is found in the cell membrane. This is a specific receptor for parathyroid hormone. The activity of this receptor is mediated by G proteins which activate adenylyl cyclase. PTH2R may be responsible for PTH effects in a number of physiological systems. It may play a significant role in pancreatic function. PTH2R presence in neurons indicates that it may function as a neurotransmitter receptor. This chain is Parathyroid hormone 2 receptor (PTH2R), found in Homo sapiens (Human).